The following is a 101-amino-acid chain: Urease subunit beta (101 aa).

The protein belongs to the urease beta subunit family. As to quaternary structure, heterotrimer of UreA (gamma), UreB (beta) and UreC (alpha) subunits. Three heterotrimers associate to form the active enzyme.

Its subcellular location is the cytoplasm. The catalysed reaction is urea + 2 H2O + H(+) = hydrogencarbonate + 2 NH4(+). The protein operates within nitrogen metabolism; urea degradation; CO(2) and NH(3) from urea (urease route): step 1/1. The chain is Urease subunit beta from Leptothrix cholodnii (strain ATCC 51168 / LMG 8142 / SP-6) (Leptothrix discophora (strain SP-6)).